We begin with the raw amino-acid sequence, 170 residues long: Cathelicidin antimicrobial peptide (170 aa).

Positions 1-30 (MKTQRDGPSLGRWSLVLLLLGLTMPLAVIA) are cleaved as a signal peptide. A propeptide spans 31 to 131 (RVLSYQEAVL…DISCDKDKRK (101 aa)) (cathelin-like domain (CLD)). 2 cysteine pairs are disulfide-bonded: Cys86-Cys97 and Cys108-Cys125. Positions 150-162 (LKNIGQRIKDFFG) are active core.

It belongs to the cathelicidin family. As to quaternary structure, monomer, homodimer or homotrimer (in vitro). Oligomerizes as tetra- or hexamer in solution (in vitro). Proteolytically cleaved by proteinase PRTN3 into antibacterial peptide LL-37. Proteolytically cleaved by cathepsin CTSG and neutrophil elastase ELANE. In terms of processing, resistant to proteolytic degradation in solution, and when bound to both zwitterionic (mimicking mammalian membranes) and negatively charged membranes (mimicking bacterial membranes). Post-translationally, after secretion onto the skin surface, the CAMP gene product is processed by a serine protease-dependent mechanism into multiple novel antimicrobial peptides distinct from and shorter than cathelicidin LL-37. These peptides show enhanced antimicrobial action, acquiring the ability to kill skin pathogens such as S.aureus, E.coli and C.albicans. These peptides have lost the ability to stimulate CXCL8/IL8 release from keratinocytes. The peptides act synergistically, killing bacteria at lower concentrations when present together, and maintain activity at increased salt condition.

Its subcellular location is the secreted. The protein localises to the vesicle. In terms of biological role, antimicrobial protein that is an integral component of the innate immune system. Binds to bacterial lipopolysaccharides (LPS). Acts via neutrophil N-formyl peptide receptors to enhance the release of CXCL2. Postsecretory processing generates multiple cathelicidin antimicrobial peptides with various lengths which act as a topical antimicrobial defense in sweat on skin. The unprocessed precursor form, cathelicidin antimicrobial peptide, inhibits the growth of Gram-negative E.coli and E.aerogenes with efficiencies comparable to that of the mature peptide LL-37 (in vitro). Functionally, antimicrobial peptide that is an integral component of the innate immune system. Binds to bacterial lipopolysaccharides (LPS). Causes membrane permeabilization by forming transmembrane pores (in vitro). Causes lysis of E.coli. Exhibits antimicrobial activity against Gram-negative bacteria such as P.aeruginosa, S.typhimurium, E.aerogenes, E.coli and P.syringae, Gram-positive bacteria such as L.monocytogenes, S.epidermidis, S.pyogenes and S.aureus, as well as vancomycin-resistant enterococci (in vitro). Exhibits antimicrobial activity against methicillin-resistant S.aureus, P.mirabilis, and C.albicans in low-salt media, but not in media containing 100 mM NaCl (in vitro). Forms chiral supramolecular assemblies with quinolone signal (PQS) molecules of P.aeruginosa, which may lead to interference of bacterial quorum signaling and perturbance of bacterial biofilm formation. May form supramolecular fiber-like assemblies on bacterial membranes. Induces cytokine and chemokine producation as well as TNF/TNFA and CSF2/GMCSF production in normal human keratinocytes. Exhibits hemolytic activity against red blood cells. Its function is as follows. Exhibits antimicrobial activity against E.coli and B.megaterium (in vitro). In Ateles fusciceps robustus (Colombian black-faced spider monkey), this protein is Cathelicidin antimicrobial peptide.